The sequence spans 292 residues: 4-hydroxy-tetrahydrodipicolinate synthase (292 aa).

Pyruvate is bound at residue Thr-45. Tyr-133 acts as the Proton donor/acceptor in catalysis. Lys-161 (schiff-base intermediate with substrate) is an active-site residue. Ile-203 lines the pyruvate pocket.

Belongs to the DapA family. In terms of assembly, homodimer.

It is found in the cytoplasm. The enzyme catalyses L-aspartate 4-semialdehyde + pyruvate = (2S,4S)-4-hydroxy-2,3,4,5-tetrahydrodipicolinate + H2O + H(+). It functions in the pathway amino-acid biosynthesis; L-lysine biosynthesis via DAP pathway; (S)-tetrahydrodipicolinate from L-aspartate: step 3/4. Catalyzes the condensation of (S)-aspartate-beta-semialdehyde [(S)-ASA] and pyruvate to 4-hydroxy-tetrahydrodipicolinate (HTPA). The sequence is that of 4-hydroxy-tetrahydrodipicolinate synthase from Pseudomonas syringae pv. syringae (strain B728a).